The primary structure comprises 75 residues: Protein SlyX homolog (75 aa).

Belongs to the SlyX family.

In Vibrio atlanticus (strain LGP32) (Vibrio splendidus (strain Mel32)), this protein is Protein SlyX homolog.